Here is a 245-residue protein sequence, read N- to C-terminus: Ubiquinone/menaquinone biosynthesis C-methyltransferase UbiE (245 aa).

Residues Thr71, Asp92, and 118 to 119 each bind S-adenosyl-L-methionine; that span reads DA.

This sequence belongs to the class I-like SAM-binding methyltransferase superfamily. MenG/UbiE family.

The catalysed reaction is a 2-demethylmenaquinol + S-adenosyl-L-methionine = a menaquinol + S-adenosyl-L-homocysteine + H(+). It carries out the reaction a 2-methoxy-6-(all-trans-polyprenyl)benzene-1,4-diol + S-adenosyl-L-methionine = a 5-methoxy-2-methyl-3-(all-trans-polyprenyl)benzene-1,4-diol + S-adenosyl-L-homocysteine + H(+). Its pathway is quinol/quinone metabolism; menaquinone biosynthesis; menaquinol from 1,4-dihydroxy-2-naphthoate: step 2/2. It participates in cofactor biosynthesis; ubiquinone biosynthesis. Methyltransferase required for the conversion of demethylmenaquinol (DMKH2) to menaquinol (MKH2) and the conversion of 2-polyprenyl-6-methoxy-1,4-benzoquinol (DDMQH2) to 2-polyprenyl-3-methyl-6-methoxy-1,4-benzoquinol (DMQH2). This Neisseria meningitidis serogroup B (strain ATCC BAA-335 / MC58) protein is Ubiquinone/menaquinone biosynthesis C-methyltransferase UbiE.